The primary structure comprises 882 residues: ABC transporter H family member 4 (882 aa).

3 helical membrane passes run 4–24 (WIKLKLTAIGWFIYGMPISVF), 35–55 (LLFKTIAVHYIIPLIIELLPW), and 79–101 (TNGPYSHSAVIKYVLLTIYYAIL). Positions 384-863 (FSYENKFSSE…NAQVYYKLLG (480 aa)) constitute an ABC transporter domain. An ATP-binding site is contributed by 418-425 (GQNRSGKS). Disordered regions lie at residues 522 to 617 (FDPD…YSTI), 634 to 669 (SMSQLNNSGGGNVNGNNNNNNNNNNNNNININNSGV), and 710 to 730 (NSGGGDESDDDDEEAERNQRS). Low complexity-rich tracts occupy residues 528-617 (IPPT…YSTI) and 647-667 (NGNNNNNNNNNNNNNININNS). Positions 715–724 (DESDDDDEEA) are enriched in acidic residues.

This sequence belongs to the ABC transporter superfamily. ABCH family.

The protein resides in the membrane. This chain is ABC transporter H family member 4 (abcH4), found in Dictyostelium discoideum (Social amoeba).